We begin with the raw amino-acid sequence, 1162 residues long: MASPLPLLYLCLAALHLAGARDATPTEEHTSTARGLQGRPPDTGQPSPALEDWEEASEWTSWFNVDHPGGDGDFESLAAIRFYYGPARVCPRPLALEARTTDWALPAAMGERVHANPERGFWCLNREQPRGRRCSNYHVRFRCPLEAAWGAWGAWGLCSKSCGLGRRLRRRSCQSSSGDTCPGSPQEAQKCVRSRCPGCSSDTCGCPNHILLGSVVTPSGRPLSGARVSLRTRPGTIATSGTHGTFQVPGVCAGSKASVSAQMNGFSAGTAQAHANSSNTATVTIILEELGKPYLVKHPESRVREAGQNVTFCCKASGTPMPKKYSWFHNGTLLDRRQQGSGPHLELQGLHQAQAGEYHCKAWNEAGTVRSRAALLTILAPGQQACDPRPQEHLIKLPDDCGQPGGGPTYLDVGLCADTRCPGPVGSGPRCGDAGSRCCSVLRLESRDIRCSGYVLPVKVVAECGCRKCLPRRGLVRGRVVAADSGEPLRFARILLGRAPIGFTSYQGDFTIEVPPATERLVVTFVDPSGDFVDSVRVLPFDPRGAGVYHEIRALRKAAAVLLDAERGGEIPLGSTEEAPALGELVLPPGTFHHPDGRPYTGPVEARVTFVDPRDLASASAASSDLRFLDSAGELAPLRTYGMFAVDLRAPGSTEQLHVARADVHVDADHVRMPGHAEALALWSLDPETGLWEEEGSEQGSGGFRRETAAARVRREERAFLVGALTMRERRLFNLDVPERRRCFVKVRAYGTDRFAPAEQVQGVVVTLLNLEPAPGFTANPRAWGRFDSAVTGPNGACVPAFCDAEKPDAYTAFVTAALGGEELEAAPSRPRATAAVVGVAQPYLERLGYQRTDHDDPALKRTGFRLNLARPRAGHESEAHGPVYPWRRLRDCEDAPVTDSHFRFSRVEADKYEYDVVPFHEGAPASWTGDLLAWWPNPQEFRACFLKVRLQGPQEYMVRSHNAGGTHEATRGRLYGLRDTRSVRHPERPGASAACVEFKCGGMLFDQRQVDRTLVTVTPQGSCRRVAVNTLLQDYLARHPPLAAADDPAAFAMLAPLDALGHNYGVYTVTDQSPRLAKEIAIGRCFDGSSDGFSREMKADAGTAVTFQCREPPARPSLFQRLLENPSSALGDIRREMGQATRYSRVNQTQAGDTGPFGPGQ.

Positions 1–20 (MASPLPLLYLCLAALHLAGA) are cleaved as a signal peptide. Positions 23–51 (ATPTEEHTSTARGLQGRPPDTGQPSPALE) are disordered. One can recognise a TSP type-1 domain in the interval 146–197 (EAAWGAWGAWGLCSKSCGLGRRLRRRSCQSSSGDTCPGSPQEAQKCVRSRCP). 4 disulfides stabilise this stretch: cysteine 158/cysteine 191, cysteine 162/cysteine 196, cysteine 173/cysteine 181, and cysteine 314/cysteine 360. In terms of domain architecture, Ig-like C2-type spans 293-377 (PYLVKHPESR…TVRSRAALLT (85 aa)). Asparagine 330 carries N-linked (GlcNAc...) asparagine glycosylation.

May be cleaved into 2 chains possibly by a furin-like protease upon or preceding secretion. Post-translationally, N-glycosylated. As to expression, expressed in articulated and meniscal cartilage (at protein level). Also detected in heart, skeletal muscle and brain. Not detected in growth plate cartilage.

Its subcellular location is the secreted. It localises to the extracellular space. It is found in the extracellular matrix. Functionally, may play a role in cartilage scaffolding. In Mus musculus (Mouse), this protein is Cartilage intermediate layer protein 2.